A 578-amino-acid chain; its full sequence is MMTPQVITPQQMQQILQQQVLTPQQLQVLLQQQQALMLQQQLQEFYKKQQEQLQLQLLQQQHAGKQPKEQQQQQQVATQQLAFQQQLLQMQQLQQQHLLTLQRQGLLSIQPGQPTLPLQSLAQGMIPAELQQLWKEVTGSHTADDVVCNNHSTLDLSTTCVSSTAQPKTSLLLNSQASTNGQASVLTLKRESSSHEEYTHNHPLYGHGVCKWPGCETICEDFPSFLKHLNSEHALDDRSTAQCRVQMQVVQQLELQLSKDKERLQAMMSHLHVKSTEPKASPQPLNLVSSATLSKTASEASPQSLPHTPTTPTAPLTPITQGPSVITTTSIHNVGPIRRRYSDKYNIPISSDFAQNQEFYKNAEVRPPFTYASLIRQGILESPEKQLTLNEIYNWFTRQFAYFRRNAATWKNAVRHNLSLHKCFVRVENVKGAVWTVDEMEFQKRRPQKISGSPTLIKNIQTSHAYCSPLSAALQASMAENSLPLYTTASMGNPALNSLANAIREDLNGVMEHTSSNGSDSSPGRSPMQGMHQVHVKEEPLDHDDNDGPLSLVTTANHSPDFDRDRDYEDDPVNDDME.

The C2H2-type zinc finger occupies 208 to 233 (GVCKWPGCETICEDFPSFLKHLNSEH). The interval 250–271 (VQQLELQLSKDKERLQAMMSHL) is leucine-zipper. Residues 284 to 288 (PLNLV) form a ctbp1-binding region. The segment covering 293–305 (LSKTASEASPQSL) has biased composition (polar residues). Residues 293-325 (LSKTASEASPQSLPHTPTTPTAPLTPITQGPSV) form a disordered region. Residues 306 to 320 (PHTPTTPTAPLTPIT) are compositionally biased toward low complexity. Residues 366–456 (RPPFTYASLI…PQKISGSPTL (91 aa)) constitute a DNA-binding region (fork-head). The disordered stretch occupies residues 511 to 578 (MEHTSSNGSD…EDDPVNDDME (68 aa)). Residues 515–527 (SSNGSDSSPGRSP) are compositionally biased toward low complexity. Residues 568–578 (YEDDPVNDDME) show a composition bias toward acidic residues.

Dimerization is required for DNA-binding. Isoform a, but not isoform b, interacts with ctbp1. In terms of tissue distribution, all isoforms show similar spatial expression. Localized to the animal hemisphere of early cleavage stage embryos. At tailbud stages, expressed in regions of the brain, eye and the splanchnic mesodermal layer of the lateral plate mesoderm surrounding the gut. At stage 35, expressed within the lens of the eye, in distinct regions of the head mesenchyme and in the area anterior to the gut. In the brain the anterior-most expression is restricted to the outer region of the mesencephalon. With ongoing development, additional expression is found in the curling gut.

It localises to the nucleus. Transcriptional repressor. In Xenopus laevis (African clawed frog), this protein is Forkhead box protein P1.